Consider the following 35-residue polypeptide: Photosystem II reaction center protein T (35 aa).

Residues 3-23 (ALVYTFLLVSTLGIIFFAIFF) traverse the membrane as a helical segment.

Belongs to the PsbT family. As to quaternary structure, PSII is composed of 1 copy each of membrane proteins PsbA, PsbB, PsbC, PsbD, PsbE, PsbF, PsbH, PsbI, PsbJ, PsbK, PsbL, PsbM, PsbT, PsbY, PsbZ, Psb30/Ycf12, at least 3 peripheral proteins of the oxygen-evolving complex and a large number of cofactors. It forms dimeric complexes.

It localises to the plastid. The protein resides in the chloroplast thylakoid membrane. Its function is as follows. Found at the monomer-monomer interface of the photosystem II (PS II) dimer, plays a role in assembly and dimerization of PSII. PSII is a light-driven water plastoquinone oxidoreductase, using light energy to abstract electrons from H(2)O, generating a proton gradient subsequently used for ATP formation. The chain is Photosystem II reaction center protein T from Schisandra chinensis (Chinese magnolia vine).